An 87-amino-acid polypeptide reads, in one-letter code: Retinal rod rhodopsin-sensitive cGMP 3',5'-cyclic phosphodiesterase subunit gamma (87 aa).

Met1 is subject to N-acetylmethionine. Basic and acidic residues predominate over residues 1-12 (MNLEPPKGEIRS). The disordered stretch occupies residues 1–55 (MNLEPPKGEIRSATRVIGGPVTPRKGPPKFKQRQTRQFKSKPPKKGVQGFGDDIP). Residues 26–44 (GPPKFKQRQTRQFKSKPPK) show a composition bias toward basic residues.

It belongs to the rod/cone cGMP-PDE gamma subunit family. As to quaternary structure, oligomer composed of two catalytic chains (alpha and beta), an inhibitory chain (gamma) and the delta chain.

The catalysed reaction is 3',5'-cyclic GMP + H2O = GMP + H(+). Functionally, participates in processes of transmission and amplification of the visual signal. cGMP-PDEs are the effector molecules in G-protein-mediated phototransduction in vertebrate rods and cones. In Mus musculus (Mouse), this protein is Retinal rod rhodopsin-sensitive cGMP 3',5'-cyclic phosphodiesterase subunit gamma (Pde6g).